The following is a 159-amino-acid chain: MSEEGSPMYSPFFGVMGAASAMVFSALGAAYGTAKSGVGISAMSVMRPELIMKCIIPVVMAGIIAIYGLVVAVLIAGKLDEAPTYTLYQGFVHMGAGLSVGLSGLAAGFAIGIVGDAGVRGTAQQPRLYVGMILILIFAEVLGLYGLIVAIFLYTKTSS.

Over 1-11 (MSEEGSPMYSP) the chain is Lumenal. Residues 12–32 (FFGVMGAASAMVFSALGAAYG) form a helical membrane-spanning segment. The Cytoplasmic segment spans residues 33–54 (TAKSGVGISAMSVMRPELIMKC). Residues 55–75 (IIPVVMAGIIAIYGLVVAVLI) form a helical membrane-spanning segment. At 76 to 93 (AGKLDEAPTYTLYQGFVH) the chain is on the lumenal side. Residues 94 to 114 (MGAGLSVGLSGLAAGFAIGIV) traverse the membrane as a helical segment. Residues 115–132 (GDAGVRGTAQQPRLYVGM) are Cytoplasmic-facing. A helical transmembrane segment spans residues 133–153 (ILILIFAEVLGLYGLIVAIFL). Topologically, residues 154–159 (YTKTSS) are lumenal.

Belongs to the V-ATPase proteolipid subunit family. In terms of assembly, V-ATPase is a heteromultimeric enzyme made up of two complexes: the ATP-hydrolytic V1 complex and the proton translocation V0 complex. The V1 complex consists of three catalytic AB heterodimers that form a heterohexamer, three peripheral stalks each consisting of EG heterodimers, one central rotor including subunits D and F, and the regulatory subunits C and H. The proton translocation complex V0 consists of the proton transport subunit a, a ring of proteolipid subunits c9c'', rotary subunit d, subunits e and f, and two accessory subunits.

It is found in the vacuole membrane. In terms of biological role, proton-conducting pore forming subunit of the V0 complex of vacuolar(H+)-ATPase (V-ATPase), a multisubunit enzyme composed of a peripheral complex (V1) that hydrolyzes ATP and a membrane integral complex (V0) that translocates protons. V-ATPase is responsible for acidifying and maintaining the pH of intracellular compartments and in some cell types, is targeted to the plasma membrane, where it is responsible for acidifying the extracellular environment. The protein is V-type proton ATPase 16 kDa proteolipid subunit c of Nephrops norvegicus (Norway lobster).